A 296-amino-acid chain; its full sequence is Isoprenyl transferase (296 aa).

Residues 1–11 (MATERNRRRKG) are compositionally biased toward basic residues. Residues 1–29 (MATERNRRRKGSYPQLPPAPDDYPTFPDK) form a disordered region. The active site involves aspartate 76. Position 76 (aspartate 76) interacts with Mg(2+). Residues 77–80 (GNGR), tryptophan 81, arginine 89, histidine 93, and 121–123 (STE) each bind substrate. Asparagine 124 (proton acceptor) is an active-site residue. Substrate contacts are provided by residues tryptophan 125, arginine 127, arginine 244, and 250–252 (RAS). Position 263 (glutamate 263) interacts with Mg(2+).

This sequence belongs to the UPP synthase family. In terms of assembly, homodimer. Mg(2+) serves as cofactor.

Catalyzes the condensation of isopentenyl diphosphate (IPP) with allylic pyrophosphates generating different type of terpenoids. The sequence is that of Isoprenyl transferase from Mycolicibacterium parafortuitum (Mycobacterium parafortuitum).